Consider the following 256-residue polypeptide: H-2 class II histocompatibility antigen, A-K alpha chain (256 aa).

An N-terminal signal peptide occupies residues 1–23 (MPRSRALILGVLALTTMLSLCGG). Residues 24-111 (EDDIEADHVG…KRSNSTPATN (88 aa)) are alpha-1. The Extracellular segment spans residues 24–218 (EDDIEADHVG…IPAPMSELTE (195 aa)). Asparagine 105 and asparagine 145 each carry an N-linked (GlcNAc...) asparagine glycan. Positions 112–205 (EAPQATVFPK…GLEEPVLKHW (94 aa)) are alpha-2. The Ig-like C1-type domain maps to 114-206 (PQATVFPKSP…LEEPVLKHWE (93 aa)). The cysteines at positions 134 and 190 are disulfide-linked. A connecting peptide region spans residues 206–218 (EPEIPAPMSELTE). Residues 219–241 (TVVCALGLSVGLVGIVVGTIFII) traverse the membrane as a helical segment. Residues 242–256 (QGLRSGGTSRHPGPL) are Cytoplasmic-facing.

This sequence belongs to the MHC class II family.

Its subcellular location is the membrane. In Mus musculus (Mouse), this protein is H-2 class II histocompatibility antigen, A-K alpha chain (H2-Aa).